Here is a 597-residue protein sequence, read N- to C-terminus: HECT-type ubiquitin ligase-interacting protein creD (597 aa).

Disordered stretches follow at residues 375 to 398, 439 to 492, and 576 to 597; these read EVDPSGYRTPGPGSGPGTPFGTLS, ASEH…MATP, and SRSHSHSDDERRIRLTQARGRA. Positions 452–466 are enriched in polar residues; sequence GPPSGSNTHGSNTHA. Residues 472-483 show a composition bias toward basic and acidic residues; the sequence is LSRRASDEDVHD.

Belongs to the arrestin family. As to quaternary structure, interacts with hulA.

Component of the regulatory network controlling carbon source utilization through ubiquitination and deubiquitination involving creA, creB, creC, creD and acrB. May be involved in signaling by recognizing appropriately phosphorylated substrates via its arrestin domains and then recruit a HECT-type ubiquitin ligase such as hulA, leading to ubiquitination of the substrate, providing a link between ubiquitination and phosphorylation in protein regulation and stability. In Emericella nidulans (strain FGSC A4 / ATCC 38163 / CBS 112.46 / NRRL 194 / M139) (Aspergillus nidulans), this protein is HECT-type ubiquitin ligase-interacting protein creD (creD).